The following is a 660-amino-acid chain: MLNKIKLQQKRKLIIGWSVFALINLVVILLTVLLRAGLPNLVSKGVTPFSAQAFGDAFIFLITRVYLDNFLRQPALLLGVITLIGYLALGRGGVQSVVGALKTVIGFILLSIGSGVLVSTARPVFDTIKGLGGTGVVLLDPYFSLASANDFFTNSFLNNDYVSLIAFSLLVGFIVNIIFVGLKRWTNTNSIMVTGHVMLQQAAVVTTLFYIVLFRQIPLLGTGIAYGAQAGLVIISGIFLGVYWSTASTGTYLVTNKVTNNAGFSIGHQQMLGIMTVAKLGKYFGDKNDSAEHKKLPKALKIFEDNIFTQTIIILSLFVVLFIVILASYKGDKPLLINWDKFGAINGLEIWNTTFGGANFTLNIIGGALKMVASLIAIMTGVRMFITELQQAFQGISEKVVPGAVVAVDIAAVYGFSINSVTFGFLSGVIGQFLAVAIMAGISYIPGNQFSFVAIPLFITLFFNSGAFGVYANAEGGWKAALLLPGIIGFLEIIVISFALRTVSNAYQASALLDAKQSFDLKALMGNSLDNNNGSALKTAVEKVVNATGVNRITEAQSFVKSDSFNSLKAVNSTLAQAIEWISKSASPVDNGFIGMADWNLYFGLLVWIGAYNVIGGWILVILATVGLILLAQIIDNGKQTKVTKLQQLLKINPQLDLNN.

The next 3 helical transmembrane spans lie at 14 to 34 (IIGW…TVLL), 74 to 94 (PALL…RGGV), and 98 to 118 (VGAL…GVLV). 141 to 142 (PY) contributes to the L-ascorbate binding site. The next 3 helical transmembrane spans lie at 162–182 (VSLI…FVGL), 194–214 (TGHV…IVLF), and 224–244 (IAYG…GVYW). Residue 196 to 200 (HVMLQ) participates in L-ascorbate binding. 268 to 269 (HQ) is an L-ascorbate binding site. Transmembrane regions (helical) follow at residues 307 to 327 (IFTQ…VILA), 362 to 382 (LNII…MTGV), 401 to 421 (VPGA…INSV), 422 to 442 (TFGF…MAGI), 450 to 470 (FSFV…AFGV), 592 to 612 (GFIG…IGAY), and 615 to 635 (IGGW…AQII). Asp409 provides a ligand contact to L-ascorbate.

This sequence belongs to the UlaA family. In terms of assembly, homodimer.

Its subcellular location is the cell membrane. Functionally, the phosphoenolpyruvate-dependent sugar phosphotransferase system (sugar PTS), a major carbohydrate active transport system, catalyzes the phosphorylation of incoming sugar substrates concomitantly with their translocation across the cell membrane. The enzyme II UlaABC PTS system is involved in ascorbate transport. This is Ascorbate-specific PTS system EIIC component (ulaA) from Mycoplasma pneumoniae (strain ATCC 29342 / M129 / Subtype 1) (Mycoplasmoides pneumoniae).